A 23-amino-acid polypeptide reads, in one-letter code: Acidic phospholipase A2 CTs-A2 (23 aa).

It depends on Ca(2+) as a cofactor. Contains 7 disulfide bonds. As to expression, expressed by the venom gland.

It localises to the secreted. The enzyme catalyses a 1,2-diacyl-sn-glycero-3-phosphocholine + H2O = a 1-acyl-sn-glycero-3-phosphocholine + a fatty acid + H(+). In terms of biological role, snake venom phospholipase A2 (PLA2) that shows a moderate inhibition of ADP-induced human platelet aggregation when tested on platelet rich plasma. Exhibits moderate hydrolytic activities and prefers the anionic micelles (dPPC with deoxycholate) to the zwitterionic micelles (dPPC with Triton X-100). PLA2 catalyzes the calcium-dependent hydrolysis of the 2-acyl groups in 3-sn-phosphoglycerides. The polypeptide is Acidic phospholipase A2 CTs-A2 (Trimeresurus stejnegeri (Chinese green tree viper)).